We begin with the raw amino-acid sequence, 142 residues long: Photosystem II extrinsic protein U (142 aa).

The N-terminal stretch at 1-29 is a signal peptide; that stretch reads MKGLVRLLTVFSLLLGCWGWLGTTQIAQA.

It belongs to the PsbU family. PSII is composed of 1 copy each of membrane proteins PsbA, PsbB, PsbC, PsbD, PsbE, PsbF, PsbH, PsbI, PsbJ, PsbK, PsbL, PsbM, PsbT, PsbX, PsbY, PsbZ, Psb30/Ycf12, peripheral proteins PsbO, CyanoQ (PsbQ), PsbU, PsbV and a large number of cofactors. It forms dimeric complexes.

It is found in the cellular thylakoid membrane. One of the extrinsic, lumenal subunits of photosystem II (PSII). PSII is a light-driven water plastoquinone oxidoreductase, using light energy to abstract electrons from H(2)O, generating a proton gradient subsequently used for ATP formation. The extrinsic proteins stabilize the structure of photosystem II oxygen-evolving complex (OEC), the ion environment of oxygen evolution and protect the OEC against heat-induced inactivation. The polypeptide is Photosystem II extrinsic protein U (Nostoc sp. (strain PCC 7120 / SAG 25.82 / UTEX 2576)).